The primary structure comprises 80 residues: Large ribosomal subunit protein uL24 (80 aa).

Belongs to the universal ribosomal protein uL24 family. As to quaternary structure, part of the 50S ribosomal subunit.

In terms of biological role, one of two assembly initiator proteins, it binds directly to the 5'-end of the 23S rRNA, where it nucleates assembly of the 50S subunit. Functionally, one of the proteins that surrounds the polypeptide exit tunnel on the outside of the subunit. The sequence is that of Large ribosomal subunit protein uL24 from Chlorobium phaeovibrioides (strain DSM 265 / 1930) (Prosthecochloris vibrioformis (strain DSM 265)).